The primary structure comprises 515 residues: Bifunctional solanapyrone synthase (515 aa).

The first 25 residues, 1–25 (MRLIILNLLSLGITPSVVGHSGPHR), serve as a signal peptide directing secretion. Residue N66 is glycosylated (N-linked (GlcNAc...) asparagine). Positions 91–261 (APKNPACIYT…THIVQRTYPL (171 aa)) constitute an FAD-binding PCMH-type domain. Residue H128 is modified to Pros-8alpha-FAD histidine. N-linked (GlcNAc...) asparagine glycans are attached at residues N274 and N355.

Belongs to the oxygen-dependent FAD-linked oxidoreductase family. FAD is required as a cofactor.

It carries out the reaction prosolanapyrone II + O2 = prosolanapyrone III + H2O2. The enzyme catalyses prosolanapyrone III = (-)-solanapyrone A. It catalyses the reaction prosolanapyrone III = solanapyrone D. It functions in the pathway phytotoxin biosynthesis. Bifunctional solanapyrone synthase; part of the gene cluster that mediates the biosynthesis of the phytotoxin solanapyrone, a causal agent of early blight disease of potato and tomato. The prosolanapyrone synthase sol1 is a polyketide synthase that produces the octaketide desmethylprosolanapyrone I via sequential condensations of 7 malonyl-CoA units with one acetyl-CoA unit, and one methylation step. The octaketide backbone is further methylated by the sol2 O-methyltransferase to yield prosolanapyrone I. Prosolanapyrone I is hydroxylated to prosolanapyrone II by the cytochrome P450 monooxygenase sol6. The solanapyrone synthase sol5 then catalyzes the oxidation of prosolanapyrone II and the subsequent Diels Alder cycloisomerization of the product prosolanapyrone III to solanapyrones A and D. Solanapyrones A and D are then converted into solanapyrones B and E, respectively, by the sol3 dehydrogenase. This chain is Bifunctional solanapyrone synthase (sol5), found in Alternaria solani.